Here is a 120-residue protein sequence, read N- to C-terminus: NAD(P)H-quinone oxidoreductase subunit 3, chloroplastic (120 aa).

3 helical membrane passes run 9–29 (IFWA…LISG), 64–84 (MFAL…PWAM), and 88–108 (VLGV…IVGS).

The protein belongs to the complex I subunit 3 family. NDH is composed of at least 16 different subunits, 5 of which are encoded in the nucleus.

It localises to the plastid. The protein localises to the chloroplast thylakoid membrane. The enzyme catalyses a plastoquinone + NADH + (n+1) H(+)(in) = a plastoquinol + NAD(+) + n H(+)(out). It carries out the reaction a plastoquinone + NADPH + (n+1) H(+)(in) = a plastoquinol + NADP(+) + n H(+)(out). NDH shuttles electrons from NAD(P)H:plastoquinone, via FMN and iron-sulfur (Fe-S) centers, to quinones in the photosynthetic chain and possibly in a chloroplast respiratory chain. The immediate electron acceptor for the enzyme in this species is believed to be plastoquinone. Couples the redox reaction to proton translocation, and thus conserves the redox energy in a proton gradient. This is NAD(P)H-quinone oxidoreductase subunit 3, chloroplastic from Calycanthus floridus var. glaucus (Eastern sweetshrub).